An 89-amino-acid chain; its full sequence is Small ribosomal subunit protein uS14 (89 aa).

It belongs to the universal ribosomal protein uS14 family. As to quaternary structure, part of the 30S ribosomal subunit. Contacts proteins S3 and S10.

In terms of biological role, binds 16S rRNA, required for the assembly of 30S particles and may also be responsible for determining the conformation of the 16S rRNA at the A site. In Chlorobaculum tepidum (strain ATCC 49652 / DSM 12025 / NBRC 103806 / TLS) (Chlorobium tepidum), this protein is Small ribosomal subunit protein uS14.